A 220-amino-acid chain; its full sequence is Probable septum site-determining protein MinC (220 aa).

The protein belongs to the MinC family. In terms of assembly, interacts with MinD and FtsZ.

In terms of biological role, cell division inhibitor that blocks the formation of polar Z ring septums. Rapidly oscillates between the poles of the cell to destabilize FtsZ filaments that have formed before they mature into polar Z rings. Prevents FtsZ polymerization. This chain is Probable septum site-determining protein MinC, found in Vibrio parahaemolyticus serotype O3:K6 (strain RIMD 2210633).